A 144-amino-acid polypeptide reads, in one-letter code: MRLNTLSPAQGAKQAPKRVGRGIGSGLGKTGGRGHKGQNSRTGGGVRRGFEGGQMPLYRRLPKFGFISRKAMVTAEVRLFQLALLETDVVDINILKACKIIPYQSQYAKIILSGTIEIPVIIRGLGVTKGARAAIEAAGGKIEE.

Residues 1-53 are disordered; that stretch reads MRLNTLSPAQGAKQAPKRVGRGIGSGLGKTGGRGHKGQNSRTGGGVRRGFEGG. Residues 21-31 show a composition bias toward gly residues; that stretch reads RGIGSGLGKTG.

The protein belongs to the universal ribosomal protein uL15 family. In terms of assembly, part of the 50S ribosomal subunit.

Functionally, binds to the 23S rRNA. This is Large ribosomal subunit protein uL15 from Hamiltonella defensa subsp. Acyrthosiphon pisum (strain 5AT).